Consider the following 166-residue polypeptide: Putative signal peptidase complex catalytic subunit SEC11B (166 aa).

Over 1–6 (MNKWRL) the chain is Cytoplasmic. The helical; Signal-anchor for type II membrane protein transmembrane segment at 7–24 (YYQVLNFGMIVSSALMIW) threads the bilayer. Residues 25 to 166 (KGLMVITGSE…LGLFVLVHRE (142 aa)) lie on the Extracellular side of the membrane. Ser-43 is an active-site residue.

This sequence belongs to the peptidase S26B family.

It localises to the membrane. It carries out the reaction Cleavage of hydrophobic, N-terminal signal or leader sequences from secreted and periplasmic proteins.. Functionally, putative component of some signal peptidase complex which removes signal peptides from nascent proteins as they are translocated into the lumen of the endoplasmic reticulum. This Homo sapiens (Human) protein is Putative signal peptidase complex catalytic subunit SEC11B (SEC11B).